The sequence spans 141 residues: VLTDAERKEVTSLWGKASGHAEDYGAEALERLFLSFPTTKTYFSHMDLSKGSAHVRAHGKKVADALTTAVGHFNDMDGALSDLSDLHAHKLRVDPVNFKLLAHCFLVVLARHHPEEFTPSAHAAMDKFLSRVATVLTSKYR.

One can recognise a Globin domain in the interval 1-141 (VLTDAERKEV…VATVLTSKYR (141 aa)). Residue His-58 coordinates O2. Position 87 (His-87) interacts with heme b.

This sequence belongs to the globin family. As to quaternary structure, heterotetramer of two alpha chains and two beta chains. In terms of tissue distribution, red blood cells.

In terms of biological role, involved in oxygen transport from the lung to the various peripheral tissues. This is Hemoglobin subunit alpha-2 from Tachyglossus aculeatus aculeatus (Southeast Australian short-beaked echidna).